The following is a 173-amino-acid chain: MSNLYESIRKYKCGYIEEILNILDMFDPLLNKFQRNSCYEDMKSELSLFMFNLIDNFPLEKDCFKEDKFIINYIYKSLKNKFIQVNKLHQKVKSYETNIDIIWVNNCDYANLLSTVIFEDIIKDLTQNEKNILRKIYLHGLRESEISRELNISRQAVNKTHLRALEKLKKLIN.

A sigma-70 factor domain-4 region spans residues 122–169 (IKDLTQNEKNILRKIYLHGLRESEISRELNISRQAVNKTHLRALEKLK). The H-T-H motif DNA-binding region spans 143 to 162 (ESEISRELNISRQAVNKTHL).

This sequence belongs to the sigma-70 factor family.

In terms of biological role, sigma factors are initiation factors that promote the attachment of RNA polymerase to specific initiation sites and are then released. Transcriptional regulator specifically required to activate expression of the toxin gene locus, composed of tcsL and tcdE/utxA. This is RNA polymerase sigma factor TcsR from Paraclostridium sordellii (Clostridium sordellii).